Consider the following 518-residue polypeptide: Uronate isomerase (518 aa).

This sequence belongs to the metallo-dependent hydrolases superfamily. Uronate isomerase family.

It catalyses the reaction D-glucuronate = D-fructuronate. The catalysed reaction is aldehydo-D-galacturonate = keto-D-tagaturonate. It participates in carbohydrate metabolism; pentose and glucuronate interconversion. In Corynebacterium glutamicum (strain ATCC 13032 / DSM 20300 / JCM 1318 / BCRC 11384 / CCUG 27702 / LMG 3730 / NBRC 12168 / NCIMB 10025 / NRRL B-2784 / 534), this protein is Uronate isomerase (uxaC).